A 210-amino-acid chain; its full sequence is ATP-dependent Clp protease proteolytic subunit (210 aa).

Serine 113 functions as the Nucleophile in the catalytic mechanism. Histidine 138 is an active-site residue.

Belongs to the peptidase S14 family. In terms of assembly, fourteen ClpP subunits assemble into 2 heptameric rings which stack back to back to give a disk-like structure with a central cavity, resembling the structure of eukaryotic proteasomes.

The protein localises to the cytoplasm. The catalysed reaction is Hydrolysis of proteins to small peptides in the presence of ATP and magnesium. alpha-casein is the usual test substrate. In the absence of ATP, only oligopeptides shorter than five residues are hydrolyzed (such as succinyl-Leu-Tyr-|-NHMec, and Leu-Tyr-Leu-|-Tyr-Trp, in which cleavage of the -Tyr-|-Leu- and -Tyr-|-Trp bonds also occurs).. Functionally, cleaves peptides in various proteins in a process that requires ATP hydrolysis. Has a chymotrypsin-like activity. Plays a major role in the degradation of misfolded proteins. This Marinomonas sp. (strain MWYL1) protein is ATP-dependent Clp protease proteolytic subunit.